We begin with the raw amino-acid sequence, 556 residues long: Chaperone protein HscC (556 aa).

This sequence belongs to the heat shock protein 70 family.

Probable chaperone. Has ATPase activity. Not stimulated by DnaJ. The chain is Chaperone protein HscC (hscC) from Escherichia coli (strain K12).